A 604-amino-acid polypeptide reads, in one-letter code: M-phase inducer phosphatase cdc-25.1 (604 aa).

Disordered regions lie at residues proline 33–phenylalanine 67 and glutamate 127–aspartate 188. The span at arginine 44–serine 54 shows a compositional bias: polar residues. Basic and acidic residues predominate over residues glutamate 127 to asparagine 138. Residues phenylalanine 305–isoleucine 413 enclose the Rhodanese domain. Disordered stretches follow at residues alanine 443–serine 464 and aspartate 562–glutamine 588.

This sequence belongs to the MPI phosphatase family.

It catalyses the reaction O-phospho-L-tyrosyl-[protein] + H2O = L-tyrosyl-[protein] + phosphate. The sequence is that of M-phase inducer phosphatase cdc-25.1 (cdc-25.1) from Caenorhabditis elegans.